A 102-amino-acid chain; its full sequence is Large ribosomal subunit protein bL21 (102 aa).

Belongs to the bacterial ribosomal protein bL21 family. Part of the 50S ribosomal subunit. Contacts protein L20.

This protein binds to 23S rRNA in the presence of protein L20. This chain is Large ribosomal subunit protein bL21, found in Lachnoclostridium phytofermentans (strain ATCC 700394 / DSM 18823 / ISDg) (Clostridium phytofermentans).